The chain runs to 834 residues: DNA polymerase I, thermostable (834 aa).

Residues 176 to 262 (KPEQWVDFRA…DLPLEVDLAQ (87 aa)) enclose the 5'-3' exonuclease domain. Residues 412-834 (ERLHRNLLKR…MGEDWLSAKG (423 aa)) are polymerase.

The protein belongs to the DNA polymerase type-A family.

The catalysed reaction is DNA(n) + a 2'-deoxyribonucleoside 5'-triphosphate = DNA(n+1) + diphosphate. Functionally, has 5'-3' exonuclease activity and no 3'-5' exonuclease activity. This is DNA polymerase I, thermostable (polA) from Thermus caldophilus.